The sequence spans 417 residues: Dibenzothiophene monooxygenase (417 aa).

Residues Tyr-96, 129–134, 159–163, Arg-282, 369–370, and His-391 contribute to the FMN site; these read NASSEN, KHFCS, and AR. The lid loop stretch occupies residues 131–142; that stretch reads SSENNSHVLDWK.

The protein belongs to the DszC flavin monooxygenase family. As to quaternary structure, homotetramer. Homodimer. Requires FAD as cofactor. The cofactor is NADH.

The protein localises to the cytoplasm. It carries out the reaction dibenzothiophene + 2 FMNH2 + 2 O2 = dibenzothiophene 5,5-dioxide + 2 FMN + 2 H2O + 2 H(+). The enzyme catalyses dibenzothiophene + FMNH2 + O2 = dibenzothiophene 5-oxide + FMN + H2O + H(+). It catalyses the reaction dibenzothiophene 5-oxide + FMNH2 + O2 = dibenzothiophene 5,5-dioxide + FMN + H2O + H(+). The protein operates within sulfur metabolism; dibenzothiophene degradation. Functionally, catalyzes the first step of the '4S' desulfurization pathway that removes covalently bound sulfur from dibenzothiophene (DBT) without breaking carbon-carbon bonds. Sulfur dioxygenase which converts DBT to DBT-sulfone (DBTO2 or DBT 5,5-dioxide) in a stepwise manner. In DBTO (dibenzothiophene-5-oxide) was reported not to be a substrate, in it is reported to be a substrate. Can also use benzyl sulfide and benzyl sulfoxide as substrates, although benzyl sulfoxide is a poor substrate. The pathway substrate specificity has been augmented using mutagenesis, however no mutations allowed use of alkylated thiophenes. The chain is Dibenzothiophene monooxygenase from Rhodococcus qingshengii.